The sequence spans 628 residues: Glutamyl-tRNA(Gln) amidotransferase subunit E (628 aa).

This sequence belongs to the GatB/GatE family. GatE subfamily. Heterodimer of GatD and GatE.

It carries out the reaction L-glutamyl-tRNA(Gln) + L-glutamine + ATP + H2O = L-glutaminyl-tRNA(Gln) + L-glutamate + ADP + phosphate + H(+). Its function is as follows. Allows the formation of correctly charged Gln-tRNA(Gln) through the transamidation of misacylated Glu-tRNA(Gln) in organisms which lack glutaminyl-tRNA synthetase. The reaction takes place in the presence of glutamine and ATP through an activated gamma-phospho-Glu-tRNA(Gln). The GatDE system is specific for glutamate and does not act on aspartate. This Thermococcus gammatolerans (strain DSM 15229 / JCM 11827 / EJ3) protein is Glutamyl-tRNA(Gln) amidotransferase subunit E.